Here is a 484-residue protein sequence, read N- to C-terminus: Proline--tRNA ligase (484 aa).

This sequence belongs to the class-II aminoacyl-tRNA synthetase family. ProS type 3 subfamily. Homodimer.

Its subcellular location is the cytoplasm. It carries out the reaction tRNA(Pro) + L-proline + ATP = L-prolyl-tRNA(Pro) + AMP + diphosphate. Its function is as follows. Catalyzes the attachment of proline to tRNA(Pro) in a two-step reaction: proline is first activated by ATP to form Pro-AMP and then transferred to the acceptor end of tRNA(Pro). This is Proline--tRNA ligase from Haloarcula marismortui (strain ATCC 43049 / DSM 3752 / JCM 8966 / VKM B-1809) (Halobacterium marismortui).